Consider the following 160-residue polypeptide: UPF0225 protein PputW619_1140 (160 aa).

Belongs to the UPF0225 family.

This is UPF0225 protein PputW619_1140 from Pseudomonas putida (strain W619).